Consider the following 314-residue polypeptide: Olfactory receptor 52B4 (314 aa).

Over 1 to 27 (MPTVNHSGTSHTVFHLLGIPGLQDQHM) the chain is Extracellular. A glycan (N-linked (GlcNAc...) asparagine) is linked at asparagine 5. A helical membrane pass occupies residues 28 to 48 (WISIPFFISYVTALLGNSLLI). At 49-56 (FIILTKRS) the chain is on the cytoplasmic side. A helical membrane pass occupies residues 57-77 (LHEPMYLFLCMLAGADIVLST). Residues 78 to 101 (CTIPQALAIFWFRAGDISLDRCIT) lie on the Extracellular side of the membrane. Cysteine 99 and cysteine 191 form a disulfide bridge. A helical membrane pass occupies residues 102–122 (QLFFIHSTFISESGILLVMAF). At 123–141 (DHYIAICYPLRYTTILTNA) the chain is on the cytoplasmic side. The helical transmembrane segment at 142 to 162 (LIKKICVTVSLRSYGTIFPII) threads the bilayer. The Extracellular segment spans residues 163-198 (FLLKRLTFCQNNIIPHTFCEHIGLAKYACNDIRINI). Residues 199–219 (WYGFSILMSTVVLDVVLIFIS) form a helical membrane-spanning segment. Residues 220–239 (YMLILHAVFHMPSPDACHKA) lie on the Cytoplasmic side of the membrane. The chain crosses the membrane as a helical span at residues 240-260 (LNTFGSHVCIIILFYGSGIFT). Over 261–275 (ILTQRFGRHIPPCIH) the chain is Extracellular. A helical transmembrane segment spans residues 276–296 (IPLANVCILAPPMLNPIIYGI). Residues 297-314 (KTKQIQEQVVQFLFIKQK) are Cytoplasmic-facing.

The protein belongs to the G-protein coupled receptor 1 family.

It localises to the cell membrane. Its function is as follows. Odorant receptor. The polypeptide is Olfactory receptor 52B4 (OR52B4) (Homo sapiens (Human)).